Reading from the N-terminus, the 497-residue chain is Ectonucleoside triphosphate diphosphohydrolase 8 (497 aa).

Topologically, residues 1–8 (MGLSWKER) are cytoplasmic. Residues 9 to 29 (VFMALLGVAAASGLTMLVLIL) traverse the membrane as a helical segment. Residues 30 to 473 (VKAINVLLPA…AQSYSIWTAG (444 aa)) lie on the Extracellular side of the membrane. An intrachain disulfide couples Cys-78 to Cys-102. Glu-168 acts as the Proton acceptor in catalysis. The cysteines at positions 245 and 294 are disulfide-linked. The N-linked (GlcNAc...) asparagine glycan is linked to Asn-306. A disulfide bridge connects residues Cys-331 and Cys-337. N-linked (GlcNAc...) asparagine glycosylation is present at Asn-365. An intrachain disulfide couples Cys-383 to Cys-405. A helical transmembrane segment spans residues 474 to 494 (VVFAVLTLVAILGAAAIQIFW). Residues 495 to 497 (TQD) lie on the Cytoplasmic side of the membrane.

The protein belongs to the GDA1/CD39 NTPase family. Ca(2+) is required as a cofactor. The cofactor is Mg(2+). Post-translationally, N-glycosylated. In terms of tissue distribution, expressed in liver, jejunum and kidney.

The protein localises to the cell membrane. It carries out the reaction a ribonucleoside 5'-triphosphate + 2 H2O = a ribonucleoside 5'-phosphate + 2 phosphate + 2 H(+). Functionally, canalicular ectonucleoside NTPDase responsible for the main hepatic NTPDase activity. Ectonucleoside NTPDases catalyze the hydrolysis of gamma- and beta-phosphate residues of nucleotides, playing a central role in concentration of extracellular nucleotides. Has activity toward ATP, ADP, UTP and UDP, but not toward AMP. The protein is Ectonucleoside triphosphate diphosphohydrolase 8 (Entpd8) of Mus musculus (Mouse).